We begin with the raw amino-acid sequence, 272 residues long: Glutamate racemase (272 aa).

Substrate is bound by residues 13–14 (DS) and 45–46 (YG). Cys76 functions as the Proton donor/acceptor in the catalytic mechanism. Position 77-78 (77-78 (NT)) interacts with substrate. Cys186 functions as the Proton donor/acceptor in the catalytic mechanism. 187–188 (TH) contributes to the substrate binding site.

This sequence belongs to the aspartate/glutamate racemases family.

It catalyses the reaction L-glutamate = D-glutamate. It participates in cell wall biogenesis; peptidoglycan biosynthesis. Functionally, provides the (R)-glutamate required for cell wall biosynthesis. This Cupriavidus pinatubonensis (strain JMP 134 / LMG 1197) (Cupriavidus necator (strain JMP 134)) protein is Glutamate racemase.